A 260-amino-acid chain; its full sequence is Homeobox-leucine zipper protein HOX25 (260 aa).

Residues M1–G10 show a composition bias toward acidic residues. Disordered stretches follow at residues M1 to R24, A121 to A145, and S190 to S221. A DNA-binding region (homeobox) is located at residues A19–Q79. The interval K78–N122 is leucine-zipper. Residues S205–Y218 are compositionally biased toward acidic residues.

It belongs to the HD-ZIP homeobox family. Class I subfamily. In terms of tissue distribution, expressed in roots, leaf sheaths and blades and panicles.

It localises to the nucleus. Its function is as follows. Probable transcription factor. In Oryza sativa subsp. indica (Rice), this protein is Homeobox-leucine zipper protein HOX25 (HOX25).